The chain runs to 513 residues: 2-isopropylmalate synthase (513 aa).

Residues 5 to 268 enclose the Pyruvate carboxyltransferase domain; that stretch reads LIIFDTTLRD…DVGVDTTQIV (264 aa). Mn(2+) contacts are provided by Asp-14, His-202, His-204, and Asn-239. Positions 394 to 513 are regulatory domain; it reads RFVSLSQRSE…KSSEKLNPQI (120 aa).

The protein belongs to the alpha-IPM synthase/homocitrate synthase family. LeuA type 1 subfamily. As to quaternary structure, homodimer. Requires Mn(2+) as cofactor.

The protein resides in the cytoplasm. It carries out the reaction 3-methyl-2-oxobutanoate + acetyl-CoA + H2O = (2S)-2-isopropylmalate + CoA + H(+). The protein operates within amino-acid biosynthesis; L-leucine biosynthesis; L-leucine from 3-methyl-2-oxobutanoate: step 1/4. Its function is as follows. Catalyzes the condensation of the acetyl group of acetyl-CoA with 3-methyl-2-oxobutanoate (2-ketoisovalerate) to form 3-carboxy-3-hydroxy-4-methylpentanoate (2-isopropylmalate). In Ralstonia nicotianae (strain ATCC BAA-1114 / GMI1000) (Ralstonia solanacearum), this protein is 2-isopropylmalate synthase.